The chain runs to 1187 residues: Tyrosine-protein phosphatase non-receptor type 14 (1187 aa).

The FERM domain occupies 21–306; it reads FVTRIRLLDS…TRHKFYKQNK (286 aa). A phosphoserine mark is found at S314, S461, and S486. Over residues 510-524 the composition is skewed to polar residues; sequence LVSPSDQRNPKNNVV. The segment at 510–531 is disordered; that stretch reads LVSPSDQRNPKNNVVPSKPGAS. A phosphoserine mark is found at S591, S593, S594, and S642. Disordered regions lie at residues 671–690 and 787–824; these read LREQGPPEEGSGSHEVPQLP and KAISMSRTDPPAVNGASLGPSISEPDLTSVKERVKKEP. Positions 815–824 are enriched in basic and acidic residues; it reads SVKERVKKEP. The residue at position 831 (S831) is a Phosphoserine. The Tyrosine-protein phosphatase domain maps to 909–1180; it reads VFTEYEQIPK…KFVYQVLIQF (272 aa). Substrate contacts are provided by residues D1079, 1121–1127, and Q1165; that span reads CSAGVGR. The active-site Phosphocysteine intermediate is the C1121.

It belongs to the protein-tyrosine phosphatase family. Non-receptor class subfamily. In terms of assembly, interacts with FLT4; the interaction is enhanced by stimulation with VEGFC. Interacts (via PPxY motifs) with YAP1 (via WW domains); this interaction leads to the cytoplasmic sequestration of YAP1 and inhibits its transcriptional co-activator activity. Ubiquitinated by the ECS (Elongin BC-CUL2/5-SOCS-box protein)/LRR1 E3 ligase complex and subsequently targeted to proteasomal degradation. Ubiquitous.

Its subcellular location is the cytoplasm. It localises to the cytoskeleton. The protein localises to the nucleus. It catalyses the reaction O-phospho-L-tyrosyl-[protein] + H2O = L-tyrosyl-[protein] + phosphate. Protein tyrosine phosphatase which may play a role in the regulation of lymphangiogenesis, cell-cell adhesion, cell-matrix adhesion, cell migration, cell growth and also regulates TGF-beta gene expression, thereby modulating epithelial-mesenchymal transition. Mediates beta-catenin dephosphorylation at adhesion junctions. Acts as a negative regulator of the oncogenic property of YAP, a downstream target of the hippo pathway, in a cell density-dependent manner. May function as a tumor suppressor. The sequence is that of Tyrosine-protein phosphatase non-receptor type 14 (PTPN14) from Homo sapiens (Human).